We begin with the raw amino-acid sequence, 473 residues long: Cannabinoid receptor 1 (473 aa).

Residues 1–117 (MKSILDGLAD…CFMILNPSQQ (117 aa)) are Extracellular-facing. Residues 2 to 23 (KSILDGLADTTFRTITTDLLYV) are required for mitochondrial localization. 2 N-linked (GlcNAc...) asparagine glycosylation sites follow: asparagine 78 and asparagine 84. Residues 118–143 (LAIAVLSLTLGTFTVLENLLVLCVIL) form a helical membrane-spanning segment. The Cytoplasmic segment spans residues 144–155 (HSRSLRCRPSYH). Residues 156 to 176 (FIGSLAVADLLGSVIFVYSFV) traverse the membrane as a helical segment. The Extracellular segment spans residues 177-188 (DFHVFHRKDSPN). The helical transmembrane segment at 189–213 (VFLFKLGGVTASFTASVGSLFLTAI) threads the bilayer. The Cytoplasmic portion of the chain corresponds to 214–233 (DRYISIHRPLAYKRIVTRPK). The chain crosses the membrane as a helical span at residues 234 to 256 (AVVAFCLMWTIAIVIAVLPLLGW). At 257–274 (NCKKLQSVCSDIFPLIDE) the chain is on the extracellular side. The helical transmembrane segment at 275-300 (TYLMFWIGVTSVLLLFIVYAYMYILW) threads the bilayer. The Cytoplasmic segment spans residues 301–345 (KAHSHAVRMIQRGTQKSIIIHTSEDGKVQVTRPDQARMDIRLAKT). The chain crosses the membrane as a helical span at residues 346–366 (LVLILVVLIICWGPLLAIMVY). The Extracellular portion of the chain corresponds to 367–378 (DVFGKMNKLIKT). Residues 379–400 (VFAFCSMLCLLNSTVNPIIYAL) traverse the membrane as a helical segment. Topologically, residues 401-473 (RSKDLRHAFR…VSTDTSAEAL (73 aa)) are cytoplasmic. A lipid anchor (S-palmitoyl cysteine) is attached at cysteine 416. Residues serine 426 and serine 430 each carry the phosphoserine modification.

Belongs to the G-protein coupled receptor 1 family. Interacts (via C-terminus) with CNRIP1. Associates with G protein alpha subunits, including G(i) alpha-1/GNAI1, G(i) alpha-3/GNAI3 and G(o)-alpha/GNAO1; palmitoylation is important for interaction with GNAI3 and GNAO1. Palmitoylation at Cys-416 is important for recruitment at both plasma membrane and lipid rafts and association with G protein alpha subunits. In terms of tissue distribution, expressed in the brain, in the striatum, medial septum, descending arm of the band of Broca, the amygdaloid nucleus, the hippocampus and cortex (at protein level). High levels in the lateral striatum. In rostral brain regions, high expression levels in the dorsal lateral striatum, while in the caudal brain regions, high levels are observed in the ventral lateral striatum. Expressed in monocytes/macrophages (at protein level). Expressed in striated muscles and in vascular smooth muscles cells (at protein level).

It is found in the cell membrane. The protein resides in the mitochondrion outer membrane. The protein localises to the cell projection. It localises to the axon. Its subcellular location is the presynapse. Hemopressin, a peptide derived from hemoglobin subunit alpha (HBA1 and/or HBA2), acts as an antagonist peptide: hemopressin-binding efficiently blocks cannabinoid receptor CNR1 and subsequent signaling. In terms of biological role, G-protein coupled receptor for cannabinoids, including endocannabinoids (eCBs), such as N-arachidonoylethanolamide (also called anandamide or AEA) and 2-arachidonoylglycerol (2-AG). Mediates many cannabinoid-induced effects, acting, among others, on food intake, memory loss, gastrointestinal motility, catalepsy, ambulatory activity, anxiety, chronic pain. Signaling typically involves reduction in cyclic AMP. In the hypothalamus, may have a dual effect on mitochondrial respiration depending upon the agonist dose and possibly upon the cell type. Increases respiration at low doses, while decreases respiration at high doses. At high doses, CNR1 signal transduction involves G-protein alpha-i protein activation and subsequent inhibition of mitochondrial soluble adenylate cyclase, decrease in cyclic AMP concentration, inhibition of protein kinase A (PKA)-dependent phosphorylation of specific subunits of the mitochondrial electron transport system, including NDUFS2. In the hypothalamus, inhibits leptin-induced reactive oxygen species (ROS) formation and mediates cannabinoid-induced increase in SREBF1 and FASN gene expression. In response to cannabinoids, drives the release of orexigenic beta-endorphin, but not that of melanocyte-stimulating hormone alpha/alpha-MSH, from hypothalamic POMC neurons, hence promoting food intake. In the hippocampus, regulates cellular respiration and energy production in response to cannabinoids. Involved in cannabinoid-dependent depolarization-induced suppression of inhibition (DSI), a process in which depolarization of CA1 postsynaptic pyramidal neurons mobilizes eCBs, which retrogradely activate presynaptic CB1 receptors, transiently decreasing GABAergic inhibitory neurotransmission. Also reduces excitatory synaptic transmission. In superior cervical ganglions and cerebral vascular smooth muscle cells, inhibits voltage-gated Ca(2+) channels in a constitutive, as well as agonist-dependent manner. Induces leptin production in adipocytes and reduces LRP2-mediated leptin clearance in the kidney, hence participating in hyperleptinemia. In adipose tissue, CNR1 signaling leads to increased expression of SREBF1, ACACA and FASN genes. In the liver, activation by endocannabinoids leads to increased de novo lipogenesis and reduced fatty acid catabolism, associated with increased expression of SREBF1/SREBP-1, GCK, ACACA, ACACB and FASN genes. May also affect de novo cholesterol synthesis and HDL-cholesteryl ether uptake. Peripherally modulates energy metabolism. In high carbohydrate diet-induced obesity, may decrease the expression of mitochondrial dihydrolipoyl dehydrogenase/DLD in striated muscles, as well as that of selected glucose/ pyruvate metabolic enzymes, hence affecting energy expenditure through mitochondrial metabolism. In response to cannabinoid anandamide, elicits a pro-inflammatory response in macrophages, which involves NLRP3 inflammasome activation and IL1B and IL18 secretion. In macrophages infiltrating pancreatic islets, this process may participate in the progression of type-2 diabetes and associated loss of pancreatic beta-cells. This chain is Cannabinoid receptor 1 (Cnr1), found in Rattus norvegicus (Rat).